The sequence spans 120 residues: NAD(P)H-quinone oxidoreductase subunit 3, chloroplastic (120 aa).

Helical transmembrane passes span isoleucine 9–glycine 29, methionine 64–methionine 84, and isoleucine 88–leucine 108.

Belongs to the complex I subunit 3 family. NDH is composed of at least 16 different subunits, 5 of which are encoded in the nucleus.

The protein localises to the plastid. It localises to the chloroplast thylakoid membrane. The enzyme catalyses a plastoquinone + NADH + (n+1) H(+)(in) = a plastoquinol + NAD(+) + n H(+)(out). It catalyses the reaction a plastoquinone + NADPH + (n+1) H(+)(in) = a plastoquinol + NADP(+) + n H(+)(out). Functionally, NDH shuttles electrons from NAD(P)H:plastoquinone, via FMN and iron-sulfur (Fe-S) centers, to quinones in the photosynthetic chain and possibly in a chloroplast respiratory chain. The immediate electron acceptor for the enzyme in this species is believed to be plastoquinone. Couples the redox reaction to proton translocation, and thus conserves the redox energy in a proton gradient. The protein is NAD(P)H-quinone oxidoreductase subunit 3, chloroplastic of Spinacia oleracea (Spinach).